The following is a 799-amino-acid chain: Protein translocase subunit SecA (799 aa).

Residues Gln-85, Gly-103 to Thr-107, and Asp-504 contribute to the ATP site.

It belongs to the SecA family. Monomer and homodimer. Part of the essential Sec protein translocation apparatus which comprises SecA, SecYEG and auxiliary proteins SecDF. Other proteins may also be involved.

Its subcellular location is the cell membrane. The protein resides in the cytoplasm. The enzyme catalyses ATP + H2O + cellular proteinSide 1 = ADP + phosphate + cellular proteinSide 2.. In terms of biological role, part of the Sec protein translocase complex. Interacts with the SecYEG preprotein conducting channel. Has a central role in coupling the hydrolysis of ATP to the transfer of proteins into and across the cell membrane, serving as an ATP-driven molecular motor driving the stepwise translocation of polypeptide chains across the membrane. This is Protein translocase subunit SecA from Lactobacillus acidophilus (strain ATCC 700396 / NCK56 / N2 / NCFM).